Consider the following 317-residue polypeptide: Ornithine carbamoyltransferase (317 aa).

Carbamoyl phosphate contacts are provided by residues 57-60 (STRT), Gln-84, Arg-108, and 135-138 (HPCQ). L-ornithine-binding positions include Asn-166, Asp-230, and 234–235 (SM). Carbamoyl phosphate is bound by residues 270 to 271 (CL) and Arg-298.

It belongs to the aspartate/ornithine carbamoyltransferase superfamily. OTCase family. In terms of assembly, homododecamer.

The protein resides in the cytoplasm. The enzyme catalyses carbamoyl phosphate + L-ornithine = L-citrulline + phosphate + H(+). It participates in amino-acid biosynthesis; L-arginine biosynthesis; L-arginine from L-ornithine and carbamoyl phosphate: step 1/3. Functionally, reversibly catalyzes the transfer of the carbamoyl group from carbamoyl phosphate (CP) to the N(epsilon) atom of ornithine (ORN) to produce L-citrulline. The chain is Ornithine carbamoyltransferase from Pyrococcus abyssi (strain GE5 / Orsay).